The sequence spans 483 residues: Glycogen synthase (483 aa).

Lys-18 contacts ADP-alpha-D-glucose.

This sequence belongs to the glycosyltransferase 1 family. Bacterial/plant glycogen synthase subfamily.

The catalysed reaction is [(1-&gt;4)-alpha-D-glucosyl](n) + ADP-alpha-D-glucose = [(1-&gt;4)-alpha-D-glucosyl](n+1) + ADP + H(+). It participates in glycan biosynthesis; glycogen biosynthesis. Synthesizes alpha-1,4-glucan chains using ADP-glucose. The chain is Glycogen synthase from Rhodopseudomonas palustris (strain ATCC BAA-98 / CGA009).